The primary structure comprises 553 residues: Solute carrier family 2, facilitated glucose transporter member 10 (553 aa).

Topologically, residues 1–15 (MGLRSTTLVLAATSS) are cytoplasmic. A helical membrane pass occupies residues 16-36 (LLGGLIFGYELGIISGALLML). Topologically, residues 37-48 (KTVFQLTCFEQE) are extracellular. The chain crosses the membrane as a helical span at residues 49–69 (ALVSAVLFGALLASLIGGFII). Over 70 to 82 (DRSGRRTSIMGSN) the chain is Cytoplasmic. Residues 83-103 (LVVLAGSIILIATSSFWWLVV) form a helical membrane-spanning segment. The Extracellular portion of the chain corresponds to 104–105 (GR). A helical transmembrane segment spans residues 106-126 (VTVGFAISISSMACCIYVSEI). Residues 127-132 (VRPHQR) lie on the Cytoplasmic side of the membrane. Residues 133–153 (GTLVSLYETGITVGILISYAM) form a helical membrane-spanning segment. Topologically, residues 154-165 (NYFLSAVNDGWK) are extracellular. A helical membrane pass occupies residues 166-186 (YMFGLAIIPAAFQFIVILFLP). Residues 187–240 (SKPHTLNFWEQDSDNGFIELEEAGESGEFKPDTYDKQYTFLDLFRSKDNMRTRT) are Cytoplasmic-facing. Residues 241–261 (LLGLGLVLFQQFTGQPNVLYY) traverse the membrane as a helical segment. 250–251 (QQ) is a binding site for D-glucose. Topologically, residues 262 to 277 (ASTIFRSVGFQSNSSA) are extracellular. N-linked (GlcNAc...) asparagine glycosylation occurs at Asn274. Residues 278–298 (VLASVGLGVVKVASTLIAICF) form a helical membrane-spanning segment. The Cytoplasmic portion of the chain corresponds to 299 to 305 (ADKAGRR). Residues 306–326 (ILLLAGCIVMTIAISGIGIVS) form a helical membrane-spanning segment. The Extracellular segment spans residues 327 to 413 (FMVELDSHRD…PPAGPDSNYA (87 aa)). N-linked (GlcNAc...) asparagine glycans are attached at residues Asn344, Asn351, and Asn400. A helical membrane pass occupies residues 414-434 (ILNWITLLSMMAFVSAFSIGF). Residues 435 to 462 (GPMTWLVLSEIYPADIRGRAFAFCNSFN) lie on the Cytoplasmic side of the membrane. Trp439 contributes to the D-glucose binding site. Residues 463–482 (WAANLLITLTFLEVIGSIGL) traverse the membrane as a helical segment. Residue Gly483 is a topological domain, extracellular. Residues 484–504 (WTFLLYGGVGLLAIAFIYFFI) form a helical membrane-spanning segment. At 505-553 (PETKGQSLEEIDQQLSSKRISKRRETSKGVRKRPSTGPPYQRVGKSNWT) the chain is on the cytoplasmic side. Positions 522–553 (KRISKRRETSKGVRKRPSTGPPYQRVGKSNWT) are disordered.

Belongs to the major facilitator superfamily. Sugar transporter (TC 2.A.1.1) family. Glucose transporter subfamily.

The protein resides in the endomembrane system. It is found in the cytoplasm. Its subcellular location is the perinuclear region. The catalysed reaction is D-glucose(out) = D-glucose(in). In terms of biological role, facilitative glucose transporter required for the development of the cardiovascular system. This chain is Solute carrier family 2, facilitated glucose transporter member 10, found in Xenopus laevis (African clawed frog).